We begin with the raw amino-acid sequence, 406 residues long: MADSQLFCVAEERSGHCAVVDGNFLYVWGGYVSIEDNEVYLPNDEIWTYDIDSGLWRMHLMEGELPASMSGSCGACINGKLYIFGGYDDKGYSNRLYFVNLRTRDETYIWEKITDFEGQPPTPRDKLSCWVYKDRLIYFGGYGCRRHSELQDCFDVHDASWEEQIFWGWHNDVHIFDTKTQTWFQPEIKGGVPPQPRAAHTCAVLGNKGYIFGGRVLQTRMNDLHYLNLDTWTWSGRITINGESPKHRSWHTLTPIADDKLFLCGGLSADNIPLSDGWIHNVTTNCWKQLTHLPKTRPRLWHTACLGKENEIMVFGGSKDDLLALDTGHCNDLLIFQTQPYSLLRSCLDCIGKNSIMLESQISLLPPKLLQQVLKKITFWAAANHREEQRVQKEETENKYQWISSN.

Kelch repeat units follow at residues 24–76 (FLYV…CGAC), 80–134 (KLYI…VYKD), 135–181 (RLIY…TKTQ), 208–258 (KGYI…PIAD), 260–307 (KLFL…ACLG), and 311–361 (EIMV…LESQ).

In terms of assembly, component of a CRL5 E3 ubiquitin-protein ligase complex, also named ECS (Elongin BC-CUL2/5-SOCS-box protein) complex, composed of CUL5, Elongin BC (ELOB and ELOC), RBX1 and substrate-specific adapter KLHDC1. Widely expressed, with high levels in skeletal muscle, pancreas and liver. Undetectable in peripheral blood leukocytes.

The protein localises to the cytoplasm. The protein resides in the cytosol. The protein operates within protein modification; protein ubiquitination. In terms of biological role, substrate-recognition component of a Cul5-RING (CRL5) E3 ubiquitin-protein ligase complex of the DesCEND (destruction via C-end degrons) pathway, which recognizes a C-degron located at the extreme C terminus of target proteins, leading to their ubiquitination and degradation. The C-degron recognized by the DesCEND pathway is usually a motif of less than ten residues and can be present in full-length proteins, truncated proteins or proteolytically cleaved forms. The CRL5(KLHDC1) complex mediates ubiquitination and degradation of truncated SELENOS selenoprotein produced by failed UGA/Sec decoding, which ends with a glycine. This chain is Kelch domain-containing protein 1, found in Homo sapiens (Human).